The primary structure comprises 499 residues: Alpha-L-arabinofuranosidase B (499 aa).

A signal peptide spans 1 to 18 (MFSRRNLVALGLAATVSA). N-linked (GlcNAc...) asparagine glycosylation is found at Asn-83 and Asn-202.

Belongs to the glycosyl hydrolase 54 family.

The catalysed reaction is Hydrolysis of terminal non-reducing alpha-L-arabinofuranoside residues in alpha-L-arabinosides.. It participates in glycan metabolism; L-arabinan degradation. Able to hydrolyze 1,5-, 1,3- and 1,2-alpha-linkages not only in L-arabinofuranosyl oligosaccharides, but also in polysac-charides containing terminal non-reducing L-arabinofuranoses in side chains, like L-arabinan, arabinogalactan and arabinoxylan. In Aspergillus niger, this protein is Alpha-L-arabinofuranosidase B (abfB).